Here is a 346-residue protein sequence, read N- to C-terminus: Arsenite methyltransferase (346 aa).

Belongs to the methyltransferase superfamily. Arsenite methyltransferase family.

The catalysed reaction is arsenic triglutathione + [thioredoxin]-dithiol + S-adenosyl-L-methionine + 2 H2O = methylarsonous acid + [thioredoxin]-disulfide + 3 glutathione + S-adenosyl-L-homocysteine + H(+). The enzyme catalyses arsenic triglutathione + 2 [thioredoxin]-dithiol + 2 S-adenosyl-L-methionine + H2O = dimethylarsinous acid + 2 [thioredoxin]-disulfide + 3 glutathione + 2 S-adenosyl-L-homocysteine + 2 H(+). It catalyses the reaction arsenic triglutathione + 3 [thioredoxin]-dithiol + 3 S-adenosyl-L-methionine = trimethylarsine + 3 [thioredoxin]-disulfide + 3 glutathione + 3 S-adenosyl-L-homocysteine + 3 H(+). In terms of biological role, catalyzes the transfer of a methyl group from AdoMet to arsenite, producing methylated arsenicals. Involved in the conversion of As(III) to dimethylarsenate as the main product in the medium and also produces dimethylarsine and trimethylarsine gases. Reduces the arsenic toxicity in the cell and may contribute to the global arsenic cycling. This Aquipseudomonas alcaligenes (strain ATCC 14909 / DSM 50342 / CCUG 1425 / JCM 20561 / NBRC 14159 / NCIMB 9945 / NCTC 10367 / 1577) (Pseudomonas alcaligenes) protein is Arsenite methyltransferase.